The primary structure comprises 477 residues: UDP-N-acetylmuramate--L-alanine ligase (477 aa).

Residue 112–118 coordinates ATP; sequence GTHGKTT.

Belongs to the MurCDEF family.

The protein localises to the cytoplasm. The catalysed reaction is UDP-N-acetyl-alpha-D-muramate + L-alanine + ATP = UDP-N-acetyl-alpha-D-muramoyl-L-alanine + ADP + phosphate + H(+). Its pathway is cell wall biogenesis; peptidoglycan biosynthesis. Functionally, cell wall formation. The chain is UDP-N-acetylmuramate--L-alanine ligase from Verminephrobacter eiseniae (strain EF01-2).